We begin with the raw amino-acid sequence, 166 residues long: MFPMVTEFMNYGQQTVRAARYIGQGFMITLSHANRLPVTIQYPYEKLITSERFRGRIHFEFDKCIACEVCVRVCPIDLPVVDWKLETHIRKKRLLNYSIDFGICIFCGNCVEYCPTNCLSMTEEYELSTYDRHELNYNQIALGRLPMSIIDDYTIRTILNLPEIKT.

4Fe-4S ferredoxin-type domains lie at 55 to 84 (GRIH…VDWK) and 95 to 124 (LNYS…MTEE). [4Fe-4S] cluster contacts are provided by Cys-64, Cys-67, Cys-70, Cys-74, Cys-104, Cys-107, Cys-110, and Cys-114.

Belongs to the complex I 23 kDa subunit family. NDH is composed of at least 16 different subunits, 5 of which are encoded in the nucleus. [4Fe-4S] cluster serves as cofactor.

It is found in the plastid. Its subcellular location is the chloroplast thylakoid membrane. The enzyme catalyses a plastoquinone + NADH + (n+1) H(+)(in) = a plastoquinol + NAD(+) + n H(+)(out). The catalysed reaction is a plastoquinone + NADPH + (n+1) H(+)(in) = a plastoquinol + NADP(+) + n H(+)(out). Functionally, NDH shuttles electrons from NAD(P)H:plastoquinone, via FMN and iron-sulfur (Fe-S) centers, to quinones in the photosynthetic chain and possibly in a chloroplast respiratory chain. The immediate electron acceptor for the enzyme in this species is believed to be plastoquinone. Couples the redox reaction to proton translocation, and thus conserves the redox energy in a proton gradient. The protein is NAD(P)H-quinone oxidoreductase subunit I, chloroplastic of Tridax balbisioides (Coatbuttons).